The sequence spans 252 residues: ATP synthase subunit a (252 aa).

The next 6 membrane-spanning stretches (helical) occupy residues 29 to 49, 87 to 107, 117 to 137, 146 to 166, 196 to 216, and 219 to 239; these read FTNV…FLFI, FFPL…IGLF, IMIT…CGFY, LFVP…IEVI, FIVS…LPLI, and VAIT…FTVL.

This sequence belongs to the ATPase A chain family. As to quaternary structure, F-type ATPases have 2 components, CF(1) - the catalytic core - and CF(0) - the membrane proton channel. CF(1) has five subunits: alpha(3), beta(3), gamma(1), delta(1), epsilon(1). CF(0) has three main subunits: a(1), b(2) and c(9-12). The alpha and beta chains form an alternating ring which encloses part of the gamma chain. CF(1) is attached to CF(0) by a central stalk formed by the gamma and epsilon chains, while a peripheral stalk is formed by the delta and b chains.

The protein resides in the cell inner membrane. Its function is as follows. Key component of the proton channel; it plays a direct role in the translocation of protons across the membrane. This Bartonella bacilliformis (strain ATCC 35685 / KC583 / Herrer 020/F12,63) protein is ATP synthase subunit a.